A 532-amino-acid polypeptide reads, in one-letter code: GH3 domain-containing protein (532 aa).

A signal peptide spans 1-18; that stretch reads MLLLWLLLLLLLLVPLLA. The disordered stretch occupies residues 100–123; that stretch reads LTQTSHTQEQESEETLPSPASPQY. N-linked (GlcNAc...) asparagine glycans are attached at residues Asn356 and Asn451.

It belongs to the GH3 family. As to expression, highly expressed in mammary tissues from mature virgins and at day 13 of pregnancy, and at lower level during lactation. Expressed at intermediate level in liver. Expressed at lower level in kidney, heart and brain.

It localises to the endoplasmic reticulum. The protein resides in the nucleus envelope. The protein is GH3 domain-containing protein (Ghdc) of Mus musculus (Mouse).